A 156-amino-acid chain; its full sequence is Small ribosomal subunit protein uS7 (156 aa).

The protein belongs to the universal ribosomal protein uS7 family. As to quaternary structure, part of the 30S ribosomal subunit. Contacts proteins S9 and S11.

One of the primary rRNA binding proteins, it binds directly to 16S rRNA where it nucleates assembly of the head domain of the 30S subunit. Is located at the subunit interface close to the decoding center, probably blocks exit of the E-site tRNA. The polypeptide is Small ribosomal subunit protein uS7 (Staphylococcus saprophyticus subsp. saprophyticus (strain ATCC 15305 / DSM 20229 / NCIMB 8711 / NCTC 7292 / S-41)).